A 181-amino-acid polypeptide reads, in one-letter code: Peptidyl-tRNA hydrolase (181 aa).

Residue Tyr-14 coordinates tRNA. The active-site Proton acceptor is His-19. The tRNA site is built by Phe-61, Asn-63, and Asn-107.

The protein belongs to the PTH family. In terms of assembly, monomer.

The protein localises to the cytoplasm. The enzyme catalyses an N-acyl-L-alpha-aminoacyl-tRNA + H2O = an N-acyl-L-amino acid + a tRNA + H(+). Hydrolyzes ribosome-free peptidyl-tRNAs (with 1 or more amino acids incorporated), which drop off the ribosome during protein synthesis, or as a result of ribosome stalling. In terms of biological role, catalyzes the release of premature peptidyl moieties from peptidyl-tRNA molecules trapped in stalled 50S ribosomal subunits, and thus maintains levels of free tRNAs and 50S ribosomes. This is Peptidyl-tRNA hydrolase from Campylobacter fetus subsp. fetus (strain 82-40).